The chain runs to 130 residues: U-scoloptoxin(17)-Er1a (130 aa).

A signal peptide spans 1–18 (MKLLVFALFLQVVQLSLA).

It belongs to the scoloptoxin-17 family. In terms of processing, contains 4 disulfide bonds. Expressed by the venom gland.

Its subcellular location is the secreted. This Ethmostigmus rubripes (Giant centipede) protein is U-scoloptoxin(17)-Er1a.